The following is a 155-amino-acid chain: MMRPVSSNNVAFCASGKSSCLSQDPMRGVDQFGLYPTQQSKFSHTVTHKNISCQTQEAINETHLQTSTSRDLDTKSDLKKKKNVGRSGKRGRPSGTTKSAGYRTSTGRPLGTTKAAGFKTSPGRPLGTTKAAGYKVSPGRPPGKKQQALMCSSDA.

Residues 60 to 69 are compositionally biased toward polar residues; it reads NETHLQTSTS. Residues 60–155 are disordered; sequence NETHLQTSTS…QQALMCSSDA (96 aa). Positions 78-92 are enriched in basic residues; that stretch reads LKKKKNVGRSGKRGR. Polar residues predominate over residues 94-107; that stretch reads SGTTKSAGYRTSTG.

Belongs to the UPF0461 family.

The polypeptide is UPF0461 protein C5orf24 homolog (Xenopus laevis (African clawed frog)).